A 367-amino-acid polypeptide reads, in one-letter code: Peptide chain release factor 2 (367 aa).

Gln254 bears the N5-methylglutamine mark.

It belongs to the prokaryotic/mitochondrial release factor family. Post-translationally, methylated by PrmC. Methylation increases the termination efficiency of RF2.

Its subcellular location is the cytoplasm. Its function is as follows. Peptide chain release factor 2 directs the termination of translation in response to the peptide chain termination codons UGA and UAA. The polypeptide is Peptide chain release factor 2 (Neisseria meningitidis serogroup B (strain ATCC BAA-335 / MC58)).